A 580-amino-acid polypeptide reads, in one-letter code: RuBisCO large subunit-binding protein subunit alpha, chloroplastic (580 aa).

Polar residues predominate over residues 1–17; it reads MAQSQLAKGSRQTTGRP. The disordered stretch occupies residues 1 to 24; the sequence is MAQSQLAKGSRQTTGRPFQNKPAR.

Belongs to the chaperonin (HSP60) family. In terms of assembly, oligomer of probably six alpha and six beta subunits.

The protein resides in the plastid. It localises to the chloroplast. Functionally, this protein binds RuBisCO small and large subunits and is implicated in the assembly of the enzyme oligomer. This is RuBisCO large subunit-binding protein subunit alpha, chloroplastic from Chlamydomonas reinhardtii (Chlamydomonas smithii).